The sequence spans 566 residues: Intracellular exo-alpha-(1-&gt;5)-L-arabinofuranosidase (566 aa).

The span at 1-12 (MTTHNSQYSAET) shows a compositional bias: polar residues. The tract at residues 1-39 (MTTHNSQYSAETTHPDKQESSPAPTAAGTTASNVSTTGN) is disordered. Residues 20-32 (SSPAPTAAGTTAS) are compositionally biased toward low complexity. Alpha-L-arabinofuranose-binding residues include Glu-69, Asn-114, and Asn-214. The Proton donor/acceptor role is filled by Glu-215. Residues Tyr-286, Glu-340, and Gln-409 each coordinate alpha-L-arabinofuranose. The active-site Nucleophile is the Glu-340.

The protein belongs to the glycosyl hydrolase 51 family. As to quaternary structure, homohexamer; trimer of dimers.

It is found in the cytoplasm. It catalyses the reaction Hydrolysis of terminal non-reducing alpha-L-arabinofuranoside residues in alpha-L-arabinosides.. The protein operates within glycan metabolism; L-arabinan degradation. Its activity is regulated as follows. Completely inhibited by Hg(2+) and Cu(2+) ions, whereas 1 mM Zn(2+) inhibited activity by 51%. Its function is as follows. Involved in the degradation of arabinan and is a key enzyme in the complete degradation of the plant cell wall. Catalyzes the cleavage of terminal alpha-(1-&gt;5)-arabinofuranosyl bonds in different hemicellulosic homopolysaccharides (branched and debranched arabinans). It is active with sugar beet arabinan and wheat arabinoxylan. It also exhibited activity against alpha-(1-&gt;5)-linked arabinobiose, arabinotriose, arabinotetraose, and arabinopentaose. This Bifidobacterium longum protein is Intracellular exo-alpha-(1-&gt;5)-L-arabinofuranosidase (abfB).